We begin with the raw amino-acid sequence, 813 residues long: Leucine--tRNA ligase (813 aa).

Positions Pro41 to His51 match the 'HIGH' region motif. The 'KMSKS' region motif lies at Lys575 to Ser579. Residue Lys578 coordinates ATP.

This sequence belongs to the class-I aminoacyl-tRNA synthetase family.

The protein localises to the cytoplasm. The catalysed reaction is tRNA(Leu) + L-leucine + ATP = L-leucyl-tRNA(Leu) + AMP + diphosphate. The sequence is that of Leucine--tRNA ligase from Francisella tularensis subsp. tularensis (strain WY96-3418).